Consider the following 155-residue polypeptide: Ribosome maturation factor RimP (155 aa).

The protein belongs to the RimP family.

Its subcellular location is the cytoplasm. Functionally, required for maturation of 30S ribosomal subunits. The protein is Ribosome maturation factor RimP of Staphylococcus saprophyticus subsp. saprophyticus (strain ATCC 15305 / DSM 20229 / NCIMB 8711 / NCTC 7292 / S-41).